A 55-amino-acid polypeptide reads, in one-letter code: Large ribosomal subunit protein bL33 (55 aa).

The protein belongs to the bacterial ribosomal protein bL33 family.

This Aeromonas hydrophila subsp. hydrophila (strain ATCC 7966 / DSM 30187 / BCRC 13018 / CCUG 14551 / JCM 1027 / KCTC 2358 / NCIMB 9240 / NCTC 8049) protein is Large ribosomal subunit protein bL33.